The primary structure comprises 453 residues: Probable exopolygalacturonase B (453 aa).

Residues 1 to 16 (MKFFALAALFASTVNS) form the signal peptide. Residues N185 and N225 are each glycosylated (N-linked (GlcNAc...) asparagine). The active-site Proton donor is the D255. A disulfide bond links C257 and C274. N-linked (GlcNAc...) asparagine glycans are attached at residues N263 and N275. H278 is a catalytic residue. PbH1 repeat units follow at residues 295-316 (IENVWIENVTLLNGENGARLKA) and 327-348 (INNVTYKNIHVENTDNPIVLDQ). N-linked (GlcNAc...) asparagine glycans are attached at residues N302, N329, N354, and N366. A PbH1 3 repeat occupies 362-405 (PSRVNFTNIVFEDIYGTSSGKRGKVVADLTCSPNAVCSGIRLKN). Residues C392 and C398 are joined by a disulfide bond. An N-linked (GlcNAc...) asparagine glycan is attached at N436.

This sequence belongs to the glycosyl hydrolase 28 family.

It localises to the secreted. It carries out the reaction [(1-&gt;4)-alpha-D-galacturonosyl](n) + H2O = alpha-D-galacturonate + [(1-&gt;4)-alpha-D-galacturonosyl](n-1). In terms of biological role, specific in hydrolyzing the terminal glycosidic bond of polygalacturonic acid and oligogalacturonates. The polypeptide is Probable exopolygalacturonase B (pgxB) (Aspergillus fumigatus (strain CBS 144.89 / FGSC A1163 / CEA10) (Neosartorya fumigata)).